The primary structure comprises 103 residues: Small ribosomal subunit protein uS10 (103 aa).

Belongs to the universal ribosomal protein uS10 family. In terms of assembly, part of the 30S ribosomal subunit.

Involved in the binding of tRNA to the ribosomes. In Psychrobacter arcticus (strain DSM 17307 / VKM B-2377 / 273-4), this protein is Small ribosomal subunit protein uS10.